Here is a 364-residue protein sequence, read N- to C-terminus: Nucleosome assembly protein 1;2 (364 aa).

Residues 32–86 are a coiled coil; it reads VESIKNTLQGLAARHTDVLESLEPKVRKRVEVLREIQSQHDDLEAKFFEERAALE. The Nuclear export signal signature appears at 53-68; that stretch reads LEPKVRKRVEVLREIQ. Positions 227-232 match the Nuclear localization signal motif; that stretch reads KKKPKK. Disordered stretches follow at residues 250 to 269 and 301 to 364; these read FNFF…DEDT and GEAA…CKQQ. Composition is skewed to acidic residues over residues 259-269 and 304-340; these read PDDDEEIDEDT and AQDE…DDED. Cys-361 is modified (cysteine methyl ester). Residue Cys-361 is the site of S-farnesyl cysteine attachment. Residues 362–364 constitute a propeptide, removed in mature form; sequence KQQ.

The protein belongs to the nucleosome assembly protein (NAP) family.

It localises to the nucleus. Its subcellular location is the cytoplasm. May modulate chromatin structure by regulation of nucleosome assembly/disassembly. This chain is Nucleosome assembly protein 1;2 (NAP1;2), found in Oryza sativa subsp. japonica (Rice).